The primary structure comprises 155 residues: S-ribosylhomocysteine lyase (155 aa).

3 residues coordinate Fe cation: H57, H61, and C124.

It belongs to the LuxS family. As to quaternary structure, homodimer. The cofactor is Fe cation.

The enzyme catalyses S-(5-deoxy-D-ribos-5-yl)-L-homocysteine = (S)-4,5-dihydroxypentane-2,3-dione + L-homocysteine. Involved in the synthesis of autoinducer 2 (AI-2) which is secreted by bacteria and is used to communicate both the cell density and the metabolic potential of the environment. The regulation of gene expression in response to changes in cell density is called quorum sensing. Catalyzes the transformation of S-ribosylhomocysteine (RHC) to homocysteine (HC) and 4,5-dihydroxy-2,3-pentadione (DPD). This chain is S-ribosylhomocysteine lyase, found in Listeria monocytogenes serotype 4b (strain CLIP80459).